The chain runs to 295 residues: Pyridoxal 5'-phosphate synthase subunit PdxS (295 aa).

Aspartate 25 is a binding site for D-ribose 5-phosphate. Lysine 82 serves as the catalytic Schiff-base intermediate with D-ribose 5-phosphate. Glycine 154 is a binding site for D-ribose 5-phosphate. Arginine 166 contacts D-glyceraldehyde 3-phosphate. Residues glycine 215 and 236–237 each bind D-ribose 5-phosphate; that span reads GS.

The protein belongs to the PdxS/SNZ family. In terms of assembly, in the presence of PdxT, forms a dodecamer of heterodimers.

The enzyme catalyses aldehydo-D-ribose 5-phosphate + D-glyceraldehyde 3-phosphate + L-glutamine = pyridoxal 5'-phosphate + L-glutamate + phosphate + 3 H2O + H(+). Its pathway is cofactor biosynthesis; pyridoxal 5'-phosphate biosynthesis. Catalyzes the formation of pyridoxal 5'-phosphate from ribose 5-phosphate (RBP), glyceraldehyde 3-phosphate (G3P) and ammonia. The ammonia is provided by the PdxT subunit. Can also use ribulose 5-phosphate and dihydroxyacetone phosphate as substrates, resulting from enzyme-catalyzed isomerization of RBP and G3P, respectively. This chain is Pyridoxal 5'-phosphate synthase subunit PdxS, found in Bacillus anthracis (strain A0248).